Here is a 200-residue protein sequence, read N- to C-terminus: Dephospho-CoA kinase (200 aa).

The DPCK domain maps to 3 to 200; sequence IIGLTGGIGS…LWQRFATQVE (198 aa). 11–16 provides a ligand contact to ATP; sequence GSGKST.

This sequence belongs to the CoaE family.

It is found in the cytoplasm. The enzyme catalyses 3'-dephospho-CoA + ATP = ADP + CoA + H(+). It functions in the pathway cofactor biosynthesis; coenzyme A biosynthesis; CoA from (R)-pantothenate: step 5/5. Functionally, catalyzes the phosphorylation of the 3'-hydroxyl group of dephosphocoenzyme A to form coenzyme A. The sequence is that of Dephospho-CoA kinase from Corynebacterium diphtheriae (strain ATCC 700971 / NCTC 13129 / Biotype gravis).